We begin with the raw amino-acid sequence, 231 residues long: NADH-ubiquinone oxidoreductase chain 4 (231 aa).

The next 6 membrane-spanning stretches (helical) occupy residues Pro1 to Ile21, Met34 to Leu54, Ile63 to Gly85, Ala89 to Tyr111, Ile128 to Pro148, and Leu156 to Ser176.

The protein belongs to the complex I subunit 4 family.

It localises to the mitochondrion membrane. It catalyses the reaction a ubiquinone + NADH + 5 H(+)(in) = a ubiquinol + NAD(+) + 4 H(+)(out). In terms of biological role, core subunit of the mitochondrial membrane respiratory chain NADH dehydrogenase (Complex I) that is believed to belong to the minimal assembly required for catalysis. Complex I functions in the transfer of electrons from NADH to the respiratory chain. The immediate electron acceptor for the enzyme is believed to be ubiquinone. This is NADH-ubiquinone oxidoreductase chain 4 (MT-ND4) from Bothriechis lateralis (Side-striped palm pitviper).